Consider the following 114-residue polypeptide: Large ribosomal subunit protein bL19 (114 aa).

This sequence belongs to the bacterial ribosomal protein bL19 family.

In terms of biological role, this protein is located at the 30S-50S ribosomal subunit interface and may play a role in the structure and function of the aminoacyl-tRNA binding site. This is Large ribosomal subunit protein bL19 from Clostridium acetobutylicum (strain ATCC 824 / DSM 792 / JCM 1419 / IAM 19013 / LMG 5710 / NBRC 13948 / NRRL B-527 / VKM B-1787 / 2291 / W).